A 447-amino-acid polypeptide reads, in one-letter code: Chromosomal replication initiator protein DnaA (447 aa).

Positions 1–70 (MQDFWSKAMD…EEILSEQLGE (70 aa)) are domain I, interacts with DnaA modulators. The domain II stretch occupies residues 70–110 (EPVTLLFAADPALEKPVASKTQTVTPVQSGGETGDQENFHS). A disordered region spans residues 87-109 (ASKTQTVTPVQSGGETGDQENFH). A compositionally biased stretch (polar residues) spans 88–99 (SKTQTVTPVQSG). The segment at 111 to 327 (GLDPRYTFDS…GALIRVSAYA (217 aa)) is domain III, AAA+ region. Residues G155, G157, K158, and T159 each coordinate ATP. The interval 328-447 (SLTGKPITMA…LASLKSMLQK (120 aa)) is domain IV, binds dsDNA.

Belongs to the DnaA family. As to quaternary structure, oligomerizes as a right-handed, spiral filament on DNA at oriC.

It is found in the cytoplasm. Its function is as follows. Plays an essential role in the initiation and regulation of chromosomal replication. ATP-DnaA binds to the origin of replication (oriC) to initiate formation of the DNA replication initiation complex once per cell cycle. Binds the DnaA box (a 9 base pair repeat at the origin) and separates the double-stranded (ds)DNA. Forms a right-handed helical filament on oriC DNA; dsDNA binds to the exterior of the filament while single-stranded (ss)DNA is stabiized in the filament's interior. The ATP-DnaA-oriC complex binds and stabilizes one strand of the AT-rich DNA unwinding element (DUE), permitting loading of DNA polymerase. After initiation quickly degrades to an ADP-DnaA complex that is not apt for DNA replication. Binds acidic phospholipids. The protein is Chromosomal replication initiator protein DnaA of Magnetococcus marinus (strain ATCC BAA-1437 / JCM 17883 / MC-1).